Here is a 393-residue protein sequence, read N- to C-terminus: S-adenosylmethionine synthase 2 (393 aa).

Glu-9 contacts Mg(2+). His-15 serves as a coordination point for ATP. Glu-43 contacts K(+). The L-methionine site is built by Glu-56 and Gln-99. ATP is bound by residues 167–169 (DGK), 235–238 (SGRF), Asp-246, 252–253 (RK), Ala-269, Lys-273, and Lys-277. L-methionine is bound at residue Asp-246. Lys-277 serves as a coordination point for L-methionine.

This sequence belongs to the AdoMet synthase family. In terms of assembly, homotetramer. Requires Mn(2+) as cofactor. It depends on Mg(2+) as a cofactor. Co(2+) is required as a cofactor. The cofactor is K(+).

It is found in the cytoplasm. The catalysed reaction is L-methionine + ATP + H2O = S-adenosyl-L-methionine + phosphate + diphosphate. It functions in the pathway amino-acid biosynthesis; S-adenosyl-L-methionine biosynthesis; S-adenosyl-L-methionine from L-methionine: step 1/1. In terms of biological role, catalyzes the formation of S-adenosylmethionine from methionine and ATP. The reaction comprises two steps that are both catalyzed by the same enzyme: formation of S-adenosylmethionine (AdoMet) and triphosphate, and subsequent hydrolysis of the triphosphate. The polypeptide is S-adenosylmethionine synthase 2 (SAMS2) (Elaeagnus umbellata (Autumn olive)).